Here is a 303-residue protein sequence, read N- to C-terminus: Caspase-7 (303 aa).

Over residues 1–21 (MADDQGCIEEQGVEDSANEDS) the composition is skewed to acidic residues. Residues 1–30 (MADDQGCIEEQGVEDSANEDSVDAKPDRSS) form a disordered region. Residue Ala2 is modified to N-acetylalanine. Residues 2–23 (ADDQGCIEEQGVEDSANEDSVD) constitute a propeptide, N-terminally processed. Ser30 carries the phosphoserine; by PAK2 modification. Ser37 carries the post-translational modification Phosphoserine. Positions 38 to 41 (KKKK) are exosite. The segment at 76-87 (KNFDKVTGMGVR) is loop L1. His144 is an active-site residue. Thr173 carries the post-translational modification Phosphothreonine; by PAK2. Cys186 is a catalytic residue. The loop L2 stretch occupies residues 187 to 196 (RGTELDDGIQ). The propeptide occupies 199-206 (SGPINDTD). The loop L3 stretch occupies residues 226 to 238 (VPGYYSWRSPGRG). Position 233 is a (Microbial infection) ADP-riboxanated arginine (Arg233). A Phosphoserine; by PAK2 modification is found at Ser239. Positions 274–288 (ESQSDDPHFHEKKQI) are loop L4.

The protein belongs to the peptidase C14A family. As to quaternary structure, heterotetramer that consists of two anti-parallel arranged heterodimers, each one formed by a 20 kDa (p20) and a 11 kDa (p11) subunit. Interacts with XIAP (via its second BIR domain); inhibiting CASP7 activity. Interacts with BIRC6/bruce. Interacts with ATXN3 (short isoform 1). Interacts with HSPA5. In terms of processing, cleavage by different proteases, such as granzyme B (GZMB), caspase-1 (CASP1), caspase-8 (CASP8), caspase-9 (CASP9) or caspase-10 (CASP10) generate the two active subunits. Its involvement in different programmed cell death processes is probably specified by the protease that activates CASP7. Cleaved and activated by initiator caspases (CASP8, CASP9 and/or CASP10), leading to execution phase of apoptosis. Cleavage and maturation by GZMB regulates granzyme-mediated programmed cell death. Cleaved and activated by CASP1 in response to bacterial infection. Propeptide domains can also be cleaved efficiently by CASP3. Active heterodimers between the small subunit of caspase-7 and the large subunit of CASP3, and vice versa, also occur. Also cleaved at the N-terminus at alternative sites by CAPN1, leading to its activation. Phosphorylation at Ser-30 and Ser-239 by PAK2 inhibits its activity. Phosphorylation at Ser-30 prevents cleavage and activation by initiator caspase CASP9, while phosphorylation at Ser-239 prevents thiol protease activity by preventing substrate-binding. Post-translationally, (Microbial infection) ADP-riboxanation by C.violaceum CopC blocks CASP7 processing, preventing CASP7 activation and ability to recognize and cleave substrates. In terms of processing, ubiquitinated by BIRC6; this activity is inhibited by DIABLO/SMAC. As to expression, highly expressed in lung, skeletal muscle, liver, kidney, spleen and heart, and moderately in testis. No expression in the brain.

The protein localises to the cytoplasm. It localises to the cytosol. Its subcellular location is the nucleus. The protein resides in the secreted. It is found in the extracellular space. It catalyses the reaction Strict requirement for an Asp residue at position P1 and has a preferred cleavage sequence of Asp-Glu-Val-Asp-|-.. During activation, the N-terminal disordered prodomain is removed by cleavage. Concomitantly, double cleavage gives rise to a large Caspase-7 subunit p20 and a small Caspase-7 subunit p11. The two large and two small subunits then assemble to form the active CASP7 complex. Can be cleaved and activated by different caspases, depending on the context. Cleaved and activated by initiator caspases (CASP8, CASP9 and/or CASP10), leading to execution phase of apoptosis. Inhibited by XIAP, which directly binds to the active site pocket and obstructs substrate entry. Cleavage and maturation by GZMB regulates granzyme-mediated programmed cell death. Cleavage and maturation by CASP1 regulates pyroptosis. Phosphorylation at Ser-30 and Ser-239 by PAK2 inhibits its activity. Inhibited by isatin sulfonamides. Inhibited by 2-(2,4-Dichlorophenoxy)- N-(2-mercapto-ethyl)-acetamide (DICA) and 5-Fluoro-1H-indole-2- carboxylic acid (2-mercapto-ethyl)-amide (FICA) allosteric inhibitors, which disrupt an interaction between Arg-187 and Tyr-223. Specifically inhibited by DARPin D7.18 and D7.43, which specifically bind to the precursor CASP7 and prevent its processing and activation. Inhibited by BIRC6; following inhibition of BIRC6-caspase binding by DIABLO/SMAC, BIRC6 is subjected to caspase cleavage, leading to an increase in active caspases. Functionally, thiol protease involved in different programmed cell death processes, such as apoptosis, pyroptosis or granzyme-mediated programmed cell death, by proteolytically cleaving target proteins. Has a marked preference for Asp-Glu-Val-Asp (DEVD) consensus sequences, with some plasticity for alternate non-canonical sequences. Its involvement in the different programmed cell death processes is probably determined by upstream proteases that activate CASP7. Acts as an effector caspase involved in the execution phase of apoptosis: following cleavage and activation by initiator caspases (CASP8, CASP9 and/or CASP10), mediates execution of apoptosis by catalyzing cleavage of proteins, such as CLSPN, PARP1, PTGES3 and YY1. Compared to CASP3, acts as a minor executioner caspase and cleaves a limited set of target proteins. Acts as a key regulator of the inflammatory response in response to bacterial infection by catalyzing cleavage and activation of the sphingomyelin phosphodiesterase SMPD1 in the extracellular milieu, thereby promoting membrane repair. Regulates pyroptosis in intestinal epithelial cells: cleaved and activated by CASP1 in response to S.typhimurium infection, promoting its secretion to the extracellular milieu, where it catalyzes activation of SMPD1, generating ceramides that repair membranes and counteract the action of gasdermin-D (GSDMD) pores. Regulates granzyme-mediated programmed cell death in hepatocytes: cleaved and activated by granzyme B (GZMB) in response to bacterial infection, promoting its secretion to the extracellular milieu, where it catalyzes activation of SMPD1, generating ceramides that repair membranes and counteract the action of perforin (PRF1) pores. Following cleavage by CASP1 in response to inflammasome activation, catalyzes processing and inactivation of PARP1, alleviating the transcription repressor activity of PARP1. Acts as an inhibitor of type I interferon production during virus-induced apoptosis by mediating cleavage of antiviral proteins CGAS, IRF3 and MAVS, thereby preventing cytokine overproduction. Cleaves and activates sterol regulatory element binding proteins (SREBPs). Cleaves phospholipid scramblase proteins XKR4, XKR8 and XKR9. In case of infection, catalyzes cleavage of Kaposi sarcoma-associated herpesvirus protein ORF57, thereby preventing expression of viral lytic genes. Cleaves BIRC6 following inhibition of BIRC6-caspase binding by DIABLO/SMAC. Lacks enzymatic activity. The protein is Caspase-7 of Homo sapiens (Human).